The primary structure comprises 109 residues: Ferredoxin (109 aa).

2 consecutive 4Fe-4S ferredoxin-type domains span residues 2-30 (TYVVTDECVKCKYTDCVEVCPVDCFYEGE) and 31-60 (FMLVINPDECIDCGVCVPDCPIDAIKPESP). 2 residues coordinate [3Fe-4S] cluster: cysteine 9 and cysteine 17. Cysteine 21, cysteine 40, cysteine 43, and cysteine 46 together coordinate [4Fe-4S] cluster. Position 50 (cysteine 50) interacts with [3Fe-4S] cluster.

[4Fe-4S] cluster is required as a cofactor. It depends on [3Fe-4S] cluster as a cofactor.

In terms of biological role, ferredoxins are iron-sulfur proteins that transfer electrons in a wide variety of metabolic reactions. This chain is Ferredoxin (fdxA), found in Rickettsia prowazekii (strain Madrid E).